Reading from the N-terminus, the 96-residue chain is Large ribosomal subunit protein bL28 (96 aa).

It belongs to the bacterial ribosomal protein bL28 family.

The sequence is that of Large ribosomal subunit protein bL28 from Leptospira biflexa serovar Patoc (strain Patoc 1 / Ames).